A 273-amino-acid polypeptide reads, in one-letter code: Vacuolar membrane protein YPL162C (273 aa).

Residues 1 to 13 (MYVSNGKDTCQLL) are Vacuolar-facing. A helical transmembrane segment spans residues 14-34 (GPVSLFVQTLMGMTAVIVLLV). Residues 35–51 (KRNYEHPRRKMIVWSYD) lie on the Cytoplasmic side of the membrane. Residues 52–72 (IGKQIIGSLGIHFLNLGISIL) form a helical membrane-spanning segment. At 73–97 (KKRRRSLFAITAKGNDDEDQCDWYF) the chain is on the vacuolar side. Residues 98–118 (LNLLLDTTVGIPILWLCLYII) traverse the membrane as a helical segment. Residues 119-156 (EKVLKSLHFQNIESGNYFPSKTVGSHPRKPLFSAFVKQ) lie on the Cytoplasmic side of the membrane. The helical transmembrane segment at 157 to 177 (LLIFIVGLGVMKFCVFLILNY) threads the bilayer. Topologically, residues 178 to 198 (LEDLAYWFADLILGWSDSWPN) are vacuolar. A helical membrane pass occupies residues 199–219 (FQVFLVMFVFPILLNCFQYFC). Topologically, residues 220 to 273 (VDNVIRLHSESLTITNAENFETNTFLNDEIPDLSEVSNEVPNKDNNISSYGSII) are cytoplasmic.

The protein resides in the vacuole membrane. The polypeptide is Vacuolar membrane protein YPL162C (Saccharomyces cerevisiae (strain ATCC 204508 / S288c) (Baker's yeast)).